A 253-amino-acid chain; its full sequence is tRNA pseudouridine synthase A (253 aa).

The active-site Nucleophile is the D52. A substrate-binding site is contributed by Y110.

The protein belongs to the tRNA pseudouridine synthase TruA family. In terms of assembly, homodimer.

It carries out the reaction uridine(38/39/40) in tRNA = pseudouridine(38/39/40) in tRNA. Functionally, formation of pseudouridine at positions 38, 39 and 40 in the anticodon stem and loop of transfer RNAs. In Thermus thermophilus (strain ATCC BAA-163 / DSM 7039 / HB27), this protein is tRNA pseudouridine synthase A.